The sequence spans 390 residues: S-adenosylmethionine synthase 3 (390 aa).

Position 9 (E9) interacts with Mg(2+). H15 is an ATP binding site. E43 is a K(+) binding site. 2 residues coordinate L-methionine: E56 and Q99. ATP-binding positions include 167–169, 235–238, D246, 252–253, A269, K273, and K277; these read DGK, SGRF, and RK. D246 serves as a coordination point for L-methionine. An L-methionine-binding site is contributed by K277.

This sequence belongs to the AdoMet synthase family. Homotetramer. Interacts with GRF3. Mn(2+) is required as a cofactor. It depends on Mg(2+) as a cofactor. The cofactor is Co(2+). Requires K(+) as cofactor.

Its subcellular location is the cytoplasm. The catalysed reaction is L-methionine + ATP + H2O = S-adenosyl-L-methionine + phosphate + diphosphate. The protein operates within amino-acid biosynthesis; S-adenosyl-L-methionine biosynthesis; S-adenosyl-L-methionine from L-methionine: step 1/1. Its activity is regulated as follows. Inhibited by 5,5'-dithiobis-2-nitrobenzoic acid (DTNB) and N-ethylmaleimide (NEM) (in vitro). Catalyzes the formation of S-adenosylmethionine from methionine and ATP. The reaction comprises two steps that are both catalyzed by the same enzyme: formation of S-adenosylmethionine (AdoMet) and triphosphate, and subsequent hydrolysis of the triphosphate. Involved in the biosynthesis of lignin. The polypeptide is S-adenosylmethionine synthase 3 (METK3) (Arabidopsis thaliana (Mouse-ear cress)).